The primary structure comprises 493 residues: Tripartite motif-containing protein 5 (493 aa).

Ala-2 is subject to N-acetylalanine. An RING-type zinc finger spans residues 15–59; it reads CPICLELLTQPLSLDCGHSFCQACLTANHKKSMLDKGESSCPVCR. At Ser-86 the chain carries Phosphoserine. The B box-type zinc finger occupies 90–132; it reads QKVDHCAHHGEKLLLFCQEDGKVICWLCERSQEHRGHHTFLTE. The Zn(2+) site is built by Cys-95, His-98, Cys-117, and His-123. Residues 131–240 are a coiled coil; it reads TEEVAREYQV…LISDLERRLQ (110 aa). Residues 185-198 are required for interaction with GABARAP and for autophagy; sequence FEQLRDILDWEESN. The 213-residue stretch at 281-493 folds into the B30.2/SPRY domain; the sequence is LKGMLEVFRE…VPMTLCSPSS (213 aa).

It belongs to the TRIM/RBCC family. Can form homodimers and homotrimers. In addition to lower-order dimerization, also exhibits a higher-order multimerization and both low- and high-order multimerizations are essential for its restriction activity. Interacts with BTBD1 and BTBD2. Interacts with PSMC4, PSMC5, PSMD7 and HSPA8/HSC70. Interacts (via B30.2/SPRY domain) with HSPA1A/B. Interacts with PSMC2, MAP3K7/TAK1, TAB2 and TAB3. Interacts with SQSTM1. Interacts with TRIM6 and TRIM34. Interacts with ULK1 (phosphorylated form), GABARAP, GABARAPL1, GABARAPL2, MAP1LC3A, MAP1LC3C and BECN1. In terms of processing, degraded in a proteasome-independent fashion in the absence of viral infection but in a proteasome-dependent fashion following exposure to restriction sensitive virus. Autoubiquitinated in a RING finger- and UBE2D2-dependent manner. Monoubiquitinated by TRIM21. Deubiquitinated by Yersinia YopJ. Ubiquitination may not lead to proteasomal degradation.

The protein localises to the cytoplasm. It is found in the nucleus. It carries out the reaction S-ubiquitinyl-[E2 ubiquitin-conjugating enzyme]-L-cysteine + [acceptor protein]-L-lysine = [E2 ubiquitin-conjugating enzyme]-L-cysteine + N(6)-ubiquitinyl-[acceptor protein]-L-lysine.. It participates in protein modification; protein ubiquitination. In terms of biological role, capsid-specific restriction factor that prevents infection from non-host-adapted retroviruses. Blocks viral replication early in the life cycle, after viral entry but before reverse transcription. In addition to acting as a capsid-specific restriction factor, also acts as a pattern recognition receptor that activates innate immune signaling in response to the retroviral capsid lattice. Binding to the viral capsid triggers its E3 ubiquitin ligase activity, and in concert with the heterodimeric ubiquitin conjugating enzyme complex UBE2V1-UBE2N (also known as UBC13-UEV1A complex) generates 'Lys-63'-linked polyubiquitin chains, which in turn are catalysts in the autophosphorylation of the MAP3K7/TAK1 complex (includes TAK1, TAB2, and TAB3). Activation of the MAP3K7/TAK1 complex by autophosphorylation results in the induction and expression of NF-kappa-B and MAPK-responsive inflammatory genes, thereby leading to an innate immune response in the infected cell. Plays a role in regulating autophagy through activation of autophagy regulator BECN1 by causing its dissociation from its inhibitors BCL2 and TAB2. This is Tripartite motif-containing protein 5 (TRIM5) from Pan troglodytes (Chimpanzee).